The chain runs to 529 residues: Scarecrow-like protein 13 (529 aa).

The segment covering Ala-51 to Ile-81 has biased composition (polar residues). Residues Ala-51 to Leu-84 are disordered. The 380-residue stretch at Leu-146 to Lys-525 folds into the GRAS domain. Residues Leu-153 to Asn-213 are leucine repeat I (LRI). Residues Met-232 to Gly-297 form a VHIID region. The VHIID signature appears at Val-263–Asp-267. The tract at residues Leu-313–His-345 is leucine repeat II (LRII). Residues Val-354 to Asn-448 are PFYRE. Residues Ala-451–Lys-525 are SAW.

This sequence belongs to the GRAS family. Expressed in roots, hypocotyls, cotyledons, shoot apex, leaves, flowers and siliques.

The protein localises to the cytoplasm. It is found in the nucleus. Probable transcription factor that acts as a positive regulator of continuous red light signals downstream of phytochrome B (phyB). Required for the regulation of hypocotyl elongation during de-etiolation. May be required to modulate phytochrome A (phyA) signal transduction in a phyB-independent way. This is Scarecrow-like protein 13 (SCL13) from Arabidopsis thaliana (Mouse-ear cress).